Reading from the N-terminus, the 239-residue chain is Ribitol-5-phosphate cytidylyltransferase (239 aa).

Residues 7–10 and 80–86 each bind CTP; these read FAGG and GETGQMS.

The protein belongs to the IspD/TarI cytidylyltransferase family. TarI subfamily.

The catalysed reaction is D-ribitol 5-phosphate + CTP + H(+) = CDP-L-ribitol + diphosphate. The protein operates within cell wall biogenesis; poly(ribitol phosphate) teichoic acid biosynthesis. Functionally, catalyzes the transfer of the cytidylyl group of CTP to D-ribitol 5-phosphate. The chain is Ribitol-5-phosphate cytidylyltransferase from Streptococcus agalactiae serotype Ia (strain ATCC 27591 / A909 / CDC SS700).